The sequence spans 556 residues: 2-succinyl-5-enolpyruvyl-6-hydroxy-3-cyclohexene-1-carboxylate synthase (556 aa).

The protein belongs to the TPP enzyme family. MenD subfamily. In terms of assembly, homodimer. It depends on Mg(2+) as a cofactor. Mn(2+) is required as a cofactor. The cofactor is thiamine diphosphate.

It carries out the reaction isochorismate + 2-oxoglutarate + H(+) = 5-enolpyruvoyl-6-hydroxy-2-succinyl-cyclohex-3-ene-1-carboxylate + CO2. It participates in quinol/quinone metabolism; 1,4-dihydroxy-2-naphthoate biosynthesis; 1,4-dihydroxy-2-naphthoate from chorismate: step 2/7. It functions in the pathway quinol/quinone metabolism; menaquinone biosynthesis. Catalyzes the thiamine diphosphate-dependent decarboxylation of 2-oxoglutarate and the subsequent addition of the resulting succinic semialdehyde-thiamine pyrophosphate anion to isochorismate to yield 2-succinyl-5-enolpyruvyl-6-hydroxy-3-cyclohexene-1-carboxylate (SEPHCHC). This chain is 2-succinyl-5-enolpyruvyl-6-hydroxy-3-cyclohexene-1-carboxylate synthase, found in Escherichia coli (strain UTI89 / UPEC).